A 65-amino-acid chain; its full sequence is Sec-independent protein translocase protein TatA (65 aa).

The helical transmembrane segment at 9-29 (ILIIVLLVVVVFGVGKLPQVG) threads the bilayer. The tract at residues 40–65 (RKASTGEDAKEEVETKEETKPAEKSE) is disordered. A compositionally biased stretch (basic and acidic residues) spans 43 to 65 (STGEDAKEEVETKEETKPAEKSE).

The protein belongs to the TatA/E family. In terms of assembly, forms a complex with TatC.

It localises to the cell membrane. In terms of biological role, part of the twin-arginine translocation (Tat) system that transports large folded proteins containing a characteristic twin-arginine motif in their signal peptide across membranes. TatA could form the protein-conducting channel of the Tat system. This is Sec-independent protein translocase protein TatA from Dehalococcoides mccartyi (strain ATCC BAA-2100 / JCM 16839 / KCTC 5957 / BAV1).